We begin with the raw amino-acid sequence, 352 residues long: DNA polymerase IV (352 aa).

Positions 4–185 constitute a UmuC domain; that stretch reads IIHVDMDCFF…LPLSKIPGVG (182 aa). Mg(2+) contacts are provided by Asp8 and Asp103. Glu104 is an active-site residue.

It belongs to the DNA polymerase type-Y family. Monomer. Mg(2+) is required as a cofactor.

It localises to the cytoplasm. It carries out the reaction DNA(n) + a 2'-deoxyribonucleoside 5'-triphosphate = DNA(n+1) + diphosphate. In terms of biological role, poorly processive, error-prone DNA polymerase involved in untargeted mutagenesis. Copies undamaged DNA at stalled replication forks, which arise in vivo from mismatched or misaligned primer ends. These misaligned primers can be extended by PolIV. Exhibits no 3'-5' exonuclease (proofreading) activity. May be involved in translesional synthesis, in conjunction with the beta clamp from PolIII. The chain is DNA polymerase IV from Yersinia pestis bv. Antiqua (strain Antiqua).